The sequence spans 185 residues: Protein DP71L (185 aa).

Positions 1 to 15 (MSRRNKKRSRRRRKK) are enriched in basic residues. The disordered stretch occupies residues 1–38 (MSRRNKKRSRRRRKKPLNDIQPGPSKSSAQDEPIKSVS). Important for host CHOP inhibition stretches follow at residues 126–128 (VHF) and 170–174 (LSTVF).

This sequence belongs to the asfivirus DP71L family. Interacts (via C-terminus) with host PPP1CB.

Its function is as follows. Interacts with the host phosphatase PP1 catalytic subunit (PPP1CB) and recruits it to dephosphorylate EIF2S1/eIF2alpha and therefore restores the host translation that has been shut-down by the host. Also inhibits the EIF2S1/eIF2alpha-ATF4-DDIT3/CHOP pathway. The protein is Protein DP71L of African swine fever virus (isolate Pig/Kenya/KEN-50/1950) (ASFV).